Reading from the N-terminus, the 101-residue chain is Small ribosomal subunit protein uS10 (101 aa).

Belongs to the universal ribosomal protein uS10 family. Part of the 30S ribosomal subunit.

Its function is as follows. Involved in the binding of tRNA to the ribosomes. This chain is Small ribosomal subunit protein uS10, found in Bacteroides fragilis (strain ATCC 25285 / DSM 2151 / CCUG 4856 / JCM 11019 / LMG 10263 / NCTC 9343 / Onslow / VPI 2553 / EN-2).